Consider the following 153-residue polypeptide: Endoribonuclease YbeY (153 aa).

Residues histidine 116, histidine 120, and histidine 126 each coordinate Zn(2+).

It belongs to the endoribonuclease YbeY family. Zn(2+) is required as a cofactor.

Its subcellular location is the cytoplasm. In terms of biological role, single strand-specific metallo-endoribonuclease involved in late-stage 70S ribosome quality control and in maturation of the 3' terminus of the 16S rRNA. The sequence is that of Endoribonuclease YbeY from Paraburkholderia phymatum (strain DSM 17167 / CIP 108236 / LMG 21445 / STM815) (Burkholderia phymatum).